The primary structure comprises 45 residues: Turripeptide OL11-like (45 aa).

Disulfide bonds link cysteine 1–cysteine 31, cysteine 5–cysteine 24, and cysteine 13–cysteine 45. The Kazal-like domain occupies cysteine 1–cysteine 45.

It belongs to the conopeptide P-like superfamily. In terms of tissue distribution, expressed by the venom duct.

Its subcellular location is the secreted. Acts as a neurotoxin by inhibiting an ion channel. May also act as a serine protease inhibitor, since it possess the kazal serine protease inhibitor signature. This chain is Turripeptide OL11-like, found in Lophiotoma albina (Sea snail).